Reading from the N-terminus, the 901-residue chain is ABC transporter A family member 8 (901 aa).

7 helical membrane passes run 34 to 54 (LITI…LFDT), 315 to 335 (IASL…FPVI), 369 to 389 (FLLI…LIGL), 402 to 422 (VFFF…SAMF), 427 to 447 (TATV…IFLF), 460 to 477 (WIIA…RGLY), and 508 to 528 (CIML…DQII). In terms of domain architecture, ABC transporter spans 586–823 (VLCNNLKKVY…YGGSYVLTVT (238 aa)). Position 624–631 (624–631 (GPNGAGKT)) interacts with ATP.

It belongs to the ABC transporter superfamily. ABCA family. CPR flippase (TC 3.A.1.211) subfamily.

The protein localises to the membrane. The protein is ABC transporter A family member 8 (ABCA8) of Arabidopsis thaliana (Mouse-ear cress).